We begin with the raw amino-acid sequence, 391 residues long: Phosphoglycerate kinase (391 aa).

Residues 21–23 (DLN), arginine 36, 59–62 (HLGR), arginine 113, and arginine 146 contribute to the substrate site. ATP is bound by residues lysine 197, glutamate 319, and 345–348 (GGDT).

The protein belongs to the phosphoglycerate kinase family. As to quaternary structure, monomer.

The protein localises to the cytoplasm. It catalyses the reaction (2R)-3-phosphoglycerate + ATP = (2R)-3-phospho-glyceroyl phosphate + ADP. It participates in carbohydrate degradation; glycolysis; pyruvate from D-glyceraldehyde 3-phosphate: step 2/5. This Shewanella sp. (strain ANA-3) protein is Phosphoglycerate kinase.